The following is a 424-amino-acid chain: Glutamyl-tRNA reductase (424 aa).

Substrate is bound by residues 51 to 54, S99, 104 to 106, and Q110; these read TCNR and EDQ. C52 (nucleophile) is an active-site residue. NADP(+) is bound at residue 179 to 184; sequence GTGEMG.

The protein belongs to the glutamyl-tRNA reductase family. In terms of assembly, homodimer.

It carries out the reaction (S)-4-amino-5-oxopentanoate + tRNA(Glu) + NADP(+) = L-glutamyl-tRNA(Glu) + NADPH + H(+). It functions in the pathway porphyrin-containing compound metabolism; protoporphyrin-IX biosynthesis; 5-aminolevulinate from L-glutamyl-tRNA(Glu): step 1/2. Its function is as follows. Catalyzes the NADPH-dependent reduction of glutamyl-tRNA(Glu) to glutamate 1-semialdehyde (GSA). The sequence is that of Glutamyl-tRNA reductase from Methanospirillum hungatei JF-1 (strain ATCC 27890 / DSM 864 / NBRC 100397 / JF-1).